We begin with the raw amino-acid sequence, 59 residues long: Temporin-CDYd (59 aa).

A signal peptide spans 1–22; the sequence is MFTLKKSMLLLLFLGTISLTLC. A propeptide spanning residues 23–42 is cleaved from the precursor; the sequence is EEERDANEEEENGGEVKEEE.

It belongs to the frog skin active peptide (FSAP) family. Temporin subfamily. As to expression, expressed by the skin glands.

The protein localises to the secreted. In terms of biological role, antimicrobial peptide. This Rana dybowskii (Dybovsky's frog) protein is Temporin-CDYd.